Consider the following 120-residue polypeptide: Ribonuclease P protein component 4 (120 aa).

4 residues coordinate Zn(2+): C67, C70, C96, and C99.

It belongs to the eukaryotic/archaeal RNase P protein component 4 family. As to quaternary structure, consists of a catalytic RNA component and at least 4-5 protein subunits. The cofactor is Zn(2+).

The protein resides in the cytoplasm. It catalyses the reaction Endonucleolytic cleavage of RNA, removing 5'-extranucleotides from tRNA precursor.. Its function is as follows. Part of ribonuclease P, a protein complex that generates mature tRNA molecules by cleaving their 5'-ends. This Thermococcus sibiricus (strain DSM 12597 / MM 739) protein is Ribonuclease P protein component 4.